A 487-amino-acid chain; its full sequence is Glutamate--tRNA ligase 2 (487 aa).

A 'HIGH' region motif is present at residues Pro31 to Gly41. The 'KMSKS' region signature appears at Pro254–Arg258. Lys257 is an ATP binding site.

This sequence belongs to the class-I aminoacyl-tRNA synthetase family. Glutamate--tRNA ligase type 1 subfamily. Monomer.

The protein localises to the cytoplasm. The catalysed reaction is tRNA(Glu) + L-glutamate + ATP = L-glutamyl-tRNA(Glu) + AMP + diphosphate. Catalyzes the attachment of glutamate to tRNA(Glu) in a two-step reaction: glutamate is first activated by ATP to form Glu-AMP and then transferred to the acceptor end of tRNA(Glu). The sequence is that of Glutamate--tRNA ligase 2 from Thermotoga maritima (strain ATCC 43589 / DSM 3109 / JCM 10099 / NBRC 100826 / MSB8).